The chain runs to 96 residues: Envelope glycoprotein N (96 aa).

Positions 1–21 (MPRSPLIVAVVAAALFAIVRG) are cleaved as a signal peptide. Over 22–54 (RDPLLDAMRREGAMDFWSAGCYARGVPLSEPPQ) the chain is Virion surface. The chain crosses the membrane as a helical span at residues 55 to 75 (ALVVFYVALTAVMVAVALYAY). Residues 76–96 (GLCFRLMGASGPNKKESRGRG) lie on the Intravirion side of the membrane.

This sequence belongs to the herpesviridae glycoprotein N family. Interacts (via N-terminus) with gM (via N-terminus). The gM-gN heterodimer forms the gCII complex.

The protein resides in the virion membrane. Its subcellular location is the host membrane. It localises to the host Golgi apparatus. The protein localises to the host trans-Golgi network. Envelope glycoprotein necessary for proper maturation of gM and modulation of its membrane fusion activity. Also plays a critical role in virion morphogenesis. The protein is Envelope glycoprotein N of Bos taurus (Bovine).